The following is a 1323-amino-acid chain: uncharacterized protein (1323 aa).

Residues 1–11 (MRELQGDDSSR) are compositionally biased toward basic and acidic residues. 2 disordered regions span residues 1-57 (MREL…SSYY) and 79-112 (IHESSTALSAQSNTAQDGDQLASSSTISKDHSET). Residues 12 to 21 (KSPPSDSVVK) are compositionally biased toward low complexity. Serine 24 is modified (phosphoserine). Over residues 27–40 (DYEHSLKSLQDERT) the composition is skewed to basic and acidic residues. Polar residues-rich tracts occupy residues 42 to 57 (NYPNKQFNSENPSSYY) and 80 to 105 (HESSTALSAQSNTAQDGDQLASSSTI). 6 WD repeats span residues 271-314 (RHST…DRAI), 320-360 (GHTR…FPVN), 364-403 (DWHNGATQVKWNYKNPHILASSHGRLVRIWDDRYGSAPLH), 409-449 (ENIT…EEPE), 453-494 (TTDS…KEGP), and 502-551 (GHTD…LNSM). The region spanning 671–779 (EELSWIGQKY…SYLSGNLSVD (109 aa)) is the RWD domain. Residues 879–888 (SNSVADSDST) are compositionally biased toward polar residues. A disordered region spans residues 879–904 (SNSVADSDSTNYDDENSLNRGGTSES). The RING-type; degenerate zinc-finger motif lies at 1265 to 1309 (CTFCCLSIHGLCIVCGLCLHVMHEDCYKEWFSNGDSISQSCSSGC).

This sequence belongs to the WD repeat WDR59 family.

Functionally, may be involved in telomere capping. This is an uncharacterized protein from Schizosaccharomyces pombe (strain 972 / ATCC 24843) (Fission yeast).